The chain runs to 428 residues: Glutamine synthetase, chloroplastic (428 aa).

A chloroplast-targeting transit peptide spans 1-49 (MAQILAASPTCQMRLTKPSSIASSKLWNSVVLKQKKQSSSKVRSFKVMA). Residues 75 to 155 (IIAEYIWIGG…VICDTYTPAG (81 aa)) form the GS beta-grasp domain. Residues 94–120 (RTLEKPVEDPSELPKWNYDGSSTGQAP) form a disordered region. Ser-104 is subject to Phosphoserine. Residues 159–428 (PTNKRARAAE…LAAQKLSLKV (270 aa)) form the GS catalytic domain.

The protein belongs to the glutamine synthetase family. In terms of assembly, homooctamer.

It localises to the plastid. Its subcellular location is the chloroplast. The enzyme catalyses L-glutamate + NH4(+) + ATP = L-glutamine + ADP + phosphate + H(+). In terms of biological role, the light-modulated chloroplast enzyme, encoded by a nuclear gene and expressed primarily in leaves, is responsible for the reassimilation of the ammonia generated by photorespiration. This chain is Glutamine synthetase, chloroplastic (GLN2), found in Brassica napus (Rape).